The chain runs to 95 residues: Protein TusB (95 aa).

The protein belongs to the DsrH/TusB family. As to quaternary structure, heterohexamer, formed by a dimer of trimers. The hexameric TusBCD complex contains 2 copies each of TusB, TusC and TusD. The TusBCD complex interacts with TusE.

Its subcellular location is the cytoplasm. Part of a sulfur-relay system required for 2-thiolation of 5-methylaminomethyl-2-thiouridine (mnm(5)s(2)U) at tRNA wobble positions. The protein is Protein TusB of Escherichia fergusonii (strain ATCC 35469 / DSM 13698 / CCUG 18766 / IAM 14443 / JCM 21226 / LMG 7866 / NBRC 102419 / NCTC 12128 / CDC 0568-73).